Reading from the N-terminus, the 147-residue chain is Lysozyme C-1 (147 aa).

Positions 1-18 (MKALLTLVFCLLPLAAQG) are cleaved as a signal peptide. A C-type lysozyme domain is found at 19 to 147 (KVYSRCELAA…VSKWIRGCRL (129 aa)). 4 disulfide bridges follow: cysteine 24–cysteine 145, cysteine 48–cysteine 133, cysteine 82–cysteine 98, and cysteine 94–cysteine 112. Active-site residues include glutamate 53 and aspartate 70.

Belongs to the glycosyl hydrolase 22 family.

The protein localises to the secreted. The enzyme catalyses Hydrolysis of (1-&gt;4)-beta-linkages between N-acetylmuramic acid and N-acetyl-D-glucosamine residues in a peptidoglycan and between N-acetyl-D-glucosamine residues in chitodextrins.. Its function is as follows. Lysozymes have primarily a bacteriolytic function; those in tissues and body fluids are associated with the monocyte-macrophage system and enhance the activity of immunoagents. The polypeptide is Lysozyme C-1 (Anas platyrhynchos (Mallard)).